The sequence spans 103 residues: Large ribosomal subunit protein bL21 (103 aa).

It belongs to the bacterial ribosomal protein bL21 family. Part of the 50S ribosomal subunit. Contacts protein L20.

Functionally, this protein binds to 23S rRNA in the presence of protein L20. This Aliivibrio fischeri (strain ATCC 700601 / ES114) (Vibrio fischeri) protein is Large ribosomal subunit protein bL21.